A 243-amino-acid chain; its full sequence is Adenosylcobinamide-GDP ribazoletransferase (243 aa).

Helical transmembrane passes span 31–51 (LLFY…FSAL), 57–77 (LMLH…GLHL), 109–129 (IAVV…LALI), 135–155 (IGLL…FLGT), and 188–208 (VLLA…CFFW).

This sequence belongs to the CobS family. It depends on Mg(2+) as a cofactor.

Its subcellular location is the cell inner membrane. The enzyme catalyses alpha-ribazole + adenosylcob(III)inamide-GDP = adenosylcob(III)alamin + GMP + H(+). It catalyses the reaction alpha-ribazole 5'-phosphate + adenosylcob(III)inamide-GDP = adenosylcob(III)alamin 5'-phosphate + GMP + H(+). It participates in cofactor biosynthesis; adenosylcobalamin biosynthesis; adenosylcobalamin from cob(II)yrinate a,c-diamide: step 7/7. Its function is as follows. Joins adenosylcobinamide-GDP and alpha-ribazole to generate adenosylcobalamin (Ado-cobalamin). Also synthesizes adenosylcobalamin 5'-phosphate from adenosylcobinamide-GDP and alpha-ribazole 5'-phosphate. This is Adenosylcobinamide-GDP ribazoletransferase from Pseudomonas savastanoi pv. phaseolicola (strain 1448A / Race 6) (Pseudomonas syringae pv. phaseolicola (strain 1448A / Race 6)).